We begin with the raw amino-acid sequence, 61 residues long: MHCLPVFVILLLLIASAPGVDVQPKTKNFMTRASLRDFAKKTPKRLSKLRGCCPRSFLCCR.

Positions 1–19 (MHCLPVFVILLLLIASAPG) are cleaved as a signal peptide. A propeptide spanning residues 20-50 (VDVQPKTKNFMTRASLRDFAKKTPKRLSKLR) is cleaved from the precursor.

The protein belongs to the conotoxin T superfamily. In terms of processing, contains 2 disulfide bonds that can be either 'C1-C3, C2-C4' or 'C1-C4, C2-C3', since these disulfide connectivities have been observed for conotoxins with cysteine framework V (for examples, see AC P0DQQ7 and AC P81755). As to expression, expressed by the venom duct.

The protein localises to the secreted. The polypeptide is Conotoxin Vn5.3 (Conus ventricosus (Mediterranean cone)).